A 502-amino-acid polypeptide reads, in one-letter code: Glycerol kinase (502 aa).

Position 14 (Thr14) interacts with ADP. The ATP site is built by Thr14, Thr15, and Ser16. Thr14 is a sn-glycerol 3-phosphate binding site. An ADP-binding site is contributed by Arg18. Sn-glycerol 3-phosphate is bound by residues Arg84, Glu85, Tyr136, and Asp246. 5 residues coordinate glycerol: Arg84, Glu85, Tyr136, Asp246, and Gln247. Residues Thr268 and Gly311 each contribute to the ADP site. Residues Thr268, Gly311, Gln315, and Gly412 each coordinate ATP. The ADP site is built by Gly412 and Asn416.

It belongs to the FGGY kinase family. In terms of assembly, homotetramer and homodimer (in equilibrium). Heterodimer with EIIA-Glc. Binds 1 zinc ion per glycerol kinase EIIA-Glc dimer. The zinc ion is important for dimerization.

The enzyme catalyses glycerol + ATP = sn-glycerol 3-phosphate + ADP + H(+). It functions in the pathway polyol metabolism; glycerol degradation via glycerol kinase pathway; sn-glycerol 3-phosphate from glycerol: step 1/1. With respect to regulation, activity of this regulatory enzyme is affected by several metabolites. Allosterically and non-competitively inhibited by fructose 1,6-bisphosphate (FBP) and unphosphorylated phosphocarrier protein EIIA-Glc (III-Glc), an integral component of the bacterial phosphotransferase (PTS) system. In terms of biological role, key enzyme in the regulation of glycerol uptake and metabolism. Catalyzes the phosphorylation of glycerol to yield sn-glycerol 3-phosphate. The protein is Glycerol kinase of Escherichia coli O81 (strain ED1a).